Consider the following 281-residue polypeptide: Pantothenate synthetase (281 aa).

ATP is bound at residue 30 to 37 (MGNLHQGH). His37 (proton donor) is an active-site residue. Gln61 contributes to the (R)-pantoate binding site. Gln61 is a binding site for beta-alanine. 149–152 (GNKD) is a binding site for ATP. (R)-pantoate is bound at residue Gln155. ATP-binding positions include Ile178 and 186–189 (MSSR).

The protein belongs to the pantothenate synthetase family. In terms of assembly, homodimer.

Its subcellular location is the cytoplasm. The enzyme catalyses (R)-pantoate + beta-alanine + ATP = (R)-pantothenate + AMP + diphosphate + H(+). Its pathway is cofactor biosynthesis; (R)-pantothenate biosynthesis; (R)-pantothenate from (R)-pantoate and beta-alanine: step 1/1. Functionally, catalyzes the condensation of pantoate with beta-alanine in an ATP-dependent reaction via a pantoyl-adenylate intermediate. The sequence is that of Pantothenate synthetase from Shewanella sp. (strain MR-7).